Here is a 181-residue protein sequence, read N- to C-terminus: Protein Syd (181 aa).

This sequence belongs to the Syd family.

The protein localises to the cell inner membrane. In terms of biological role, interacts with the SecY protein in vivo. May bind preferentially to an uncomplexed state of SecY, thus functioning either as a chelating agent for excess SecY in the cell or as a regulatory factor that negatively controls the translocase function. This Alteromonas mediterranea (strain DSM 17117 / CIP 110805 / LMG 28347 / Deep ecotype) protein is Protein Syd.